Here is a 740-residue protein sequence, read N- to C-terminus: NAD(P)H-quinone oxidoreductase subunit 5, chloroplastic (740 aa).

16 helical membrane passes run 9–29, 40–60, 89–109, 125–145, 147–167, 185–205, 219–239, 258–278, 286–306, 327–347, 354–374, 396–416, 425–445, 543–563, 602–622, and 717–737; these read WIIP…LFLF, WAFQ…YLSI, IDPL…MVLI, FAYM…SNLI, IYIF…FWFT, GDFG…SFEF, NEVD…GAVA, TPIS…FLVA, VIPY…LLGA, LGYM…FHLI, ALLF…VGYS, ITFL…CFWS, WLYS…TAFY, LFPI…GIPF, VLSV…YKPI, and SYLF…YLLF.

It belongs to the complex I subunit 5 family. In terms of assembly, NDH is composed of at least 16 different subunits, 5 of which are encoded in the nucleus.

It localises to the plastid. It is found in the chloroplast thylakoid membrane. The catalysed reaction is a plastoquinone + NADH + (n+1) H(+)(in) = a plastoquinol + NAD(+) + n H(+)(out). It carries out the reaction a plastoquinone + NADPH + (n+1) H(+)(in) = a plastoquinol + NADP(+) + n H(+)(out). In terms of biological role, NDH shuttles electrons from NAD(P)H:plastoquinone, via FMN and iron-sulfur (Fe-S) centers, to quinones in the photosynthetic chain and possibly in a chloroplast respiratory chain. The immediate electron acceptor for the enzyme in this species is believed to be plastoquinone. Couples the redox reaction to proton translocation, and thus conserves the redox energy in a proton gradient. The sequence is that of NAD(P)H-quinone oxidoreductase subunit 5, chloroplastic (ndhF) from Nicotiana tabacum (Common tobacco).